The sequence spans 105 residues: MLITTSEKLYGVEYETLDVVFGVTTHSKNIVKNIGAGLKNLVGGEIKAYTEMQQEARKIAMDRLKEEAKNIGADAIIAMRFDSGSISNDMQSVVAYGTAVKFKNQ.

The protein belongs to the UPF0145 family.

The sequence is that of UPF0145 protein from Enterococcus faecalis (Streptococcus faecalis).